The primary structure comprises 552 residues: AP-1-like transcription factor (552 aa).

Residues 1 to 14 (MSGQTETLSSTSNI) show a composition bias toward polar residues. The segment at 1 to 99 (MSGQTETLSS…QRAFRKRKED (99 aa)) is disordered. Basic and acidic residues predominate over residues 36–47 (PVSDRSSRRTSS). Over residues 48 to 61 (EEVDLMPNVDDEVD) the composition is skewed to acidic residues. The span at 62 to 80 (GDVKPKKIGRKNSDQEPSS) shows a compositional bias: basic and acidic residues. One can recognise a bZIP domain in the interval 76 to 139 (QEPSSKRKAQ…RQLEEELRIL (64 aa)). A Nuclear localization signal motif is present at residues 81 to 88 (KRKAQNRA). The interval 81-102 (KRKAQNRAAQRAFRKRKEDHLK) is basic motif. Positions 104-111 (LETQVVTL) are leucine-zipper. The segment at 213–244 (QVPPTLVDSNSAQGTLSPETPSSSDSPSNLYL) is disordered. The span at 219 to 228 (VDSNSAQGTL) shows a compositional bias: polar residues. The span at 229–240 (SPETPSSSDSPS) shows a compositional bias: low complexity. The interval 259-290 (CSALSNGENGEDVADGKQFCQKLSTACGSIAC) is n-CRD. Intrachain disulfides connect Cys-278/Cys-501 and Cys-285/Cys-532. Residues 460 to 489 (ISNHPDEVPPDGLPQKGKHDTSSQMPSENE) form a disordered region. The c-CRD stretch occupies residues 501–532 (CPKVWSKIINHPRFESFDIDDLCSKLKNKAKC). The Nuclear export signal signature appears at 515-533 (ESFDIDDLCSKLKNKAKCS).

It belongs to the bZIP family. YAP subfamily. Homodimer. The reduced form of pap1 interacts in the nucleus with the nuclear export protein crm1, and in the cytoplasm with the peroxiredoxin tpx1. In terms of processing, depending on the oxidative stress inducing agent, pap1 can undergo two distinct conformational changes, both masking the nuclear export signal, thus abolishing nuclear export by crm1/exportin 1. The glutathione-depleting agent diethylmaleate (DEM) leads to the non-reversible modification of at least 2 cysteine residues in the c-CRD. Peroxide stress induces the formation of a tpx1-dependent interdomain disulfide bond between Cys-278 and Cys-501.

The protein localises to the nucleus. It is found in the cytoplasm. Functionally, transcription activator involved in multidrug resistance, oxidative stress response, and redox homeostasis. Regulates the transcription of genes encoding antioxidant enzymes like catalase ctt1 and components of the cellular thiol-reducing pathways, including the thioredoxin system (trx2, trr1), ABC transporters involved in multidrug resistance like bfr1/hba2 and pmd1 as well as the gene obr1/apt1. Preferentially binds to promoters with the core binding site 5'-TTA[CG]TAA-3'. Activity of the transcription factor is controlled through oxidation of specific cysteine residues resulting in the alteration of its subcellular location. Oxidative stress induces nuclear accumulation and as a result pap1 transcriptional activity. Required for sty1/spc1-conferred staurosporine resistance. The chain is AP-1-like transcription factor (pap1) from Schizosaccharomyces pombe (strain 972 / ATCC 24843) (Fission yeast).